The primary structure comprises 374 residues: DNA/RNA-binding protein ALBA4 (374 aa).

Belongs to the histone-like Alba family.

It is found in the cytoplasm. It localises to the cell cortex. Its subcellular location is the perinuclear region. Its function is as follows. Possesses DNA- and RNA-binding activities. Binds to DNA with relaxed sequence specificity. May associate with the subtelomeric TARE6 repeats. Regulates the abundance of transcript sub-populations in a stage-specific manner. Regulates activation of male gametocytes. Participates in the coordination of sporozoite development in the oocyst. This chain is DNA/RNA-binding protein ALBA4, found in Plasmodium yoelii yoelii.